Consider the following 426-residue polypeptide: Stationary phase-inducible protein CsiE (426 aa).

2 consecutive PRD domains span residues 120–225 and 229–336; these read ARNF…DPLR and QRDR…ENDL.

The protein is Stationary phase-inducible protein CsiE (csiE) of Escherichia coli (strain K12).